A 346-amino-acid polypeptide reads, in one-letter code: Syntaxin UFE1 (346 aa).

The Cytoplasmic portion of the chain corresponds to 1-324; it reads MMSDLTPIFR…RKAKRAAGRT (324 aa). One can recognise a t-SNARE coiled-coil homology domain in the interval 255 to 317; it reads LNQKNEQLKK…KKGNKELRKA (63 aa). A helical; Anchor for type IV membrane protein membrane pass occupies residues 325 to 342; that stretch reads AKMTTYGAIIMGVFILFL. Residues 343–346 are Lumenal-facing; that stretch reads DYVG.

It belongs to the syntaxin family. In terms of assembly, component of a SNARE complex consisting of UFE1, USE1, SEC20 and SEC22 or YKT6.

The protein localises to the endoplasmic reticulum membrane. In terms of biological role, syntaxin required for targeting and fusion of Golgi-derived retrograde transport vesicles with the ER. The sequence is that of Syntaxin UFE1 (UFE1) from Saccharomyces cerevisiae (strain ATCC 204508 / S288c) (Baker's yeast).